A 508-amino-acid chain; its full sequence is MLO-like protein 3 (508 aa).

Residues 1-21 (MTDKEESNHSSEVGAVRSLQE) lie on the Extracellular side of the membrane. A helical transmembrane segment spans residues 22–42 (TPTWALATVCFFFIAVSICLE). Residues 43–68 (RLINLLSTRLKKNRKTSLLEAVEKLK) are Cytoplasmic-facing. Residues 69–89 (SVLMVLGFMSLMLNVTEGEVS) form a helical membrane-spanning segment. The Extracellular portion of the chain corresponds to 90–153 (KICIPIKYAN…SEEGLTQLSY (64 aa)). The helical transmembrane segment at 154–174 (FFFVLACMHILCNLAILLLGM) threads the bilayer. Over 175 to 275 (AKMRKWNSWE…IQRSLHEDFK (101 aa)) the chain is Cytoplasmic. The chain crosses the membrane as a helical span at residues 276-296 (TVVGISPLMWLTVVIFMLLDV). The Extracellular portion of the chain corresponds to 297–304 (SGWRVYFY). The chain crosses the membrane as a helical span at residues 305–325 (MSFVPLIIVLVIGTKLEMIVA). Residues 326–357 (KMAVTIKENNSVIRGTPLVESNDTHFWFSNPR) are Cytoplasmic-facing. A helical membrane pass occupies residues 358 to 378 (FLLSILHYTLFLNTFEMAFIV). Over 379–401 (WITWQFGINSCYHDNQGIIITRL) the chain is Extracellular. A helical transmembrane segment spans residues 402–422 (VLAVTVQFLSSYITLPLYAIV). The Cytoplasmic segment spans residues 423-508 (TQMGSSYKRA…EIQIQEKTER (86 aa)). Residues 436 to 457 (EQLANVLRHWQGMVRDKKKTIQ) form a calmodulin-binding region. The disordered stretch occupies residues 453 to 492 (KKTIQTPDTDNNSNNNNGDIDSGESPVQTEVASEFRFSGR). Phosphoserine is present on serine 494.

This sequence belongs to the MLO family.

Its subcellular location is the membrane. In terms of biological role, may be involved in modulation of pathogen defense and leaf cell death. Activity seems to be regulated by Ca(2+)-dependent calmodulin binding and seems not to require heterotrimeric G proteins. In Arabidopsis thaliana (Mouse-ear cress), this protein is MLO-like protein 3 (MLO3).